The following is a 907-amino-acid chain: MSEGNDQDQGKGRLSLRPAGRKDVGRTVDAGSVRQSFSHGRSKVVQVEVRKKRGPGPAPAGSGSGSSGGGRAGGRGGSGGRALTASELATRQRVLEEQRAEAVRREQERREQEKIMILSAAEEARRRDEEARRAAEDEVREKEEAAARAREEEAERRASAQAHGQAGTPSRAEPEPESSGPVVSAVPIPGAVTLAPPMERLRPLAERAIMPARPVTPSRPATPAATPQAPGETLRLRTGRVGEAEDDRRPARRPGGGIAPGRKPSGASPKKGGDSRRSGRIDVQAAIEGDDDKTRSLASVRRQRERERRQAELERLRADQVRVVRDVILPETITVQELANRMAARQGEVIKALMKMGVMATVTQSLDADTAELVVQEFGHRVRRVADSDVEIGIEGIEDQPEDLLPRPPVVTVMGHVDHGKTSLLDALRTTDVAAAEAGGITQHIGAYQVTLPSGSKITFIDTPGHEAFTAMRARGASVTDVVVLVVAADDGVMPQTIEAIRHAKAANAPIIVAINKCDKPGANPERVRQELLSHEIVVESMGGDTQDVEVSALKRTGLDKLEEAILLQAEMLDLRANPDRVAEGSVIESRLDRGRGPVATVLVQKGTLRRGDIVVAGAEWGRVRAMLDDRGRQIQEAAPAMPVEILGIAGVPGAGEPFVVVDNENRAREISEFRQRVIRDRTAAGQTAARGTLDQMLARIQAGAQKEVAVLIKADVQGSAEALQATVLKLEHEEVKVRVLTAGVGQITESDVQLAKASDAVIIAFNVRATTQARELAQREGVDIRYYSIIYQVADDVEQLVKGKVAPKHREKFLGYAEIRKVFDITKVGKVAGCYVTEGVVKRGCGVRLLRDNVVVHEGELSQLKRFKDDVKEVARGYECGLSFAGYNDLREGDMVECYEMELVPA.

A disordered region spans residues 1-305 (MSEGNDQDQG…SLASVRRQRE (305 aa)). The segment covering 62 to 80 (SGSGSSGGGRAGGRGGSGG) has biased composition (gly residues). Composition is skewed to basic and acidic residues over residues 93 to 114 (RVLE…EQEK) and 122 to 158 (EEAR…ERRA). Residues 211-230 (PARPVTPSRPATPAATPQAP) are compositionally biased toward low complexity. 2 stretches are compositionally biased toward basic and acidic residues: residues 240-249 (RVGEAEDDRR) and 271-280 (KGGDSRRSGR). The 171-residue stretch at 406 to 576 (PRPPVVTVMG…LLQAEMLDLR (171 aa)) folds into the tr-type G domain. Positions 415–422 (GHVDHGKT) are G1. 415 to 422 (GHVDHGKT) serves as a coordination point for GTP. Residues 440–444 (GITQH) are G2. The G3 stretch occupies residues 462–465 (DTPG). Residues 462–466 (DTPGH) and 516–519 (NKCD) each bind GTP. Positions 516–519 (NKCD) are G4. The G5 stretch occupies residues 552–554 (SAL).

Belongs to the TRAFAC class translation factor GTPase superfamily. Classic translation factor GTPase family. IF-2 subfamily.

The protein resides in the cytoplasm. Functionally, one of the essential components for the initiation of protein synthesis. Protects formylmethionyl-tRNA from spontaneous hydrolysis and promotes its binding to the 30S ribosomal subunits. Also involved in the hydrolysis of GTP during the formation of the 70S ribosomal complex. This is Translation initiation factor IF-2 from Gluconacetobacter diazotrophicus (strain ATCC 49037 / DSM 5601 / CCUG 37298 / CIP 103539 / LMG 7603 / PAl5).